The chain runs to 88 residues: ATP synthase subunit c 2 (88 aa).

2 consecutive transmembrane segments (helical) span residues 4–24 (FSWVMITAGFGMAIGSLGTGI) and 53–73 (IGLAMIESLAIYVFVVAMIIL).

Belongs to the ATPase C chain family. As to quaternary structure, F-type ATPases have 2 components, F(1) - the catalytic core - and F(0) - the membrane proton channel. F(1) has five subunits: alpha(3), beta(3), gamma(1), delta(1), epsilon(1). F(0) has three main subunits: a(1), b(2) and c(10-14). The alpha and beta chains form an alternating ring which encloses part of the gamma chain. F(1) is attached to F(0) by a central stalk formed by the gamma and epsilon chains, while a peripheral stalk is formed by the delta and b chains.

Its subcellular location is the cell inner membrane. F(1)F(0) ATP synthase produces ATP from ADP in the presence of a proton or sodium gradient. F-type ATPases consist of two structural domains, F(1) containing the extramembraneous catalytic core and F(0) containing the membrane proton channel, linked together by a central stalk and a peripheral stalk. During catalysis, ATP synthesis in the catalytic domain of F(1) is coupled via a rotary mechanism of the central stalk subunits to proton translocation. Its function is as follows. Key component of the F(0) channel; it plays a direct role in translocation across the membrane. A homomeric c-ring of between 10-14 subunits forms the central stalk rotor element with the F(1) delta and epsilon subunits. This Syntrophotalea carbinolica (strain DSM 2380 / NBRC 103641 / GraBd1) (Pelobacter carbinolicus) protein is ATP synthase subunit c 2.